Consider the following 220-residue polypeptide: Ribosomal RNA large subunit methyltransferase E (220 aa).

S-adenosyl-L-methionine contacts are provided by Gly64, Trp66, Asp92, Asp108, and Asp133. Lys173 (proton acceptor) is an active-site residue.

This sequence belongs to the class I-like SAM-binding methyltransferase superfamily. RNA methyltransferase RlmE family.

The protein localises to the cytoplasm. It catalyses the reaction uridine(2552) in 23S rRNA + S-adenosyl-L-methionine = 2'-O-methyluridine(2552) in 23S rRNA + S-adenosyl-L-homocysteine + H(+). Functionally, specifically methylates the uridine in position 2552 of 23S rRNA at the 2'-O position of the ribose in the fully assembled 50S ribosomal subunit. In Acidovorax sp. (strain JS42), this protein is Ribosomal RNA large subunit methyltransferase E.